A 137-amino-acid polypeptide reads, in one-letter code: Large-conductance mechanosensitive channel (137 aa).

Transmembrane regions (helical) follow at residues A9–F29 and I79–I99.

The protein belongs to the MscL family. As to quaternary structure, homopentamer.

It is found in the cell inner membrane. Its function is as follows. Channel that opens in response to stretch forces in the membrane lipid bilayer. May participate in the regulation of osmotic pressure changes within the cell. This chain is Large-conductance mechanosensitive channel, found in Pseudomonas fluorescens (strain Pf0-1).